Consider the following 284-residue polypeptide: NADPH-dependent 7-cyano-7-deazaguanine reductase (284 aa).

Position 91-93 (91-93 (IES)) interacts with substrate. NADPH is bound at residue 93–94 (SK). Cys192 (thioimide intermediate) is an active-site residue. Asp199 serves as the catalytic Proton donor. 231–232 (HE) provides a ligand contact to substrate. 260–261 (RG) contacts NADPH.

Belongs to the GTP cyclohydrolase I family. QueF type 2 subfamily. Homodimer.

It is found in the cytoplasm. The enzyme catalyses 7-aminomethyl-7-carbaguanine + 2 NADP(+) = 7-cyano-7-deazaguanine + 2 NADPH + 3 H(+). Its pathway is tRNA modification; tRNA-queuosine biosynthesis. Functionally, catalyzes the NADPH-dependent reduction of 7-cyano-7-deazaguanine (preQ0) to 7-aminomethyl-7-deazaguanine (preQ1). This Shewanella denitrificans (strain OS217 / ATCC BAA-1090 / DSM 15013) protein is NADPH-dependent 7-cyano-7-deazaguanine reductase.